The sequence spans 303 residues: Small ribosomal subunit protein bS1m (303 aa).

At S2 the chain carries N-acetylserine. A mitochondrion; not cleaved-targeting transit peptide spans 2 to 13 (SFAQILRGSRAM).

This sequence belongs to the bacterial ribosomal protein bS1 family. Component of the mitochondrial small ribosomal subunit (mt-SSU). Mature yeast 74S mitochondrial ribosomes consist of a small (37S) and a large (54S) subunit. The 37S small subunit contains a 15S ribosomal RNA (15S mt-rRNA) and at least 32 different proteins. The 54S large subunit contains a 21S rRNA (21S mt-rRNA) and at least 45 different proteins. This subunit is mutually exclusive with mug178/small ribosomal subunit protein L51-b.

It localises to the mitochondrion. Component of the mitochondrial ribosome (mitoribosome), a dedicated translation machinery responsible for the synthesis of mitochondrial genome-encoded proteins, including at least some of the essential transmembrane subunits of the mitochondrial respiratory chain. The mitoribosomes are attached to the mitochondrial inner membrane and translation products are cotranslationally integrated into the membrane. bS1m functionally interacts with the 5'-UTR of mitochondrial mRNAs. Plays an essential role in mitochondrial translation. This chain is Small ribosomal subunit protein bS1m (mrp51), found in Schizosaccharomyces pombe (strain 972 / ATCC 24843) (Fission yeast).